Consider the following 175-residue polypeptide: 19.0 kDa class II heat shock protein (175 aa).

One can recognise a sHSP domain in the interval 42-165 (DRRAMANTPM…KPRVVEVKVA (124 aa)). The tract at residues 145–175 (TVDKKPPPEPKKPRVVEVKVAGAGEPKGKGK) is disordered. The span at 146-161 (VDKKPPPEPKKPRVVE) shows a compositional bias: basic and acidic residues.

This sequence belongs to the small heat shock protein (HSP20) family. As to quaternary structure, may form oligomeric structures.

It localises to the cytoplasm. In Oryza sativa subsp. japonica (Rice), this protein is 19.0 kDa class II heat shock protein (HSP19.0).